Consider the following 199-residue polypeptide: MVASVPLRNVSHLLSVLRSQNVPRYLQNGVPRDVLLFRHERGRFFAILGLFCAGQGIFWTSLAVAALSRPLSRVPAEAPNRSYQDLRSALWRYGLAVGCGTMGVLVLGAGLLYSLRSVRSVMLLAGGQQVTLTTYAPFGLGTCFTVPLNQISCMAHRGEVPAMLPLKVKGRRFYFLLDKAGHFPNTQLFDNTVGAYRSL.

The Mitochondrial matrix portion of the chain corresponds to 1-43 (MVASVPLRNVSHLLSVLRSQNVPRYLQNGVPRDVLLFRHERGR). A helical membrane pass occupies residues 44–64 (FFAILGLFCAGQGIFWTSLAV). Over 65-94 (AALSRPLSRVPAEAPNRSYQDLRSALWRYG) the chain is Mitochondrial intermembrane. Residues 95-115 (LAVGCGTMGVLVLGAGLLYSL) form a helical membrane-spanning segment. At 116 to 199 (RSVRSVMLLA…DNTVGAYRSL (84 aa)) the chain is on the mitochondrial matrix side.

This sequence belongs to the TMEM223 family. In terms of assembly, associates with the mitochondrial ribosome.

It is found in the mitochondrion inner membrane. Its function is as follows. Mitochondrial ribosome-associated protein involved in the first steps of cytochrome c oxidase complex (complex IV) biogenesis. Stimulates the translation of MT-CO1 mRNA and is a constituent of early MT-CO1 assembly intermediates. This chain is Transmembrane protein 223, found in Mus musculus (Mouse).